A 107-amino-acid chain; its full sequence is Ferredoxin-6 (107 aa).

The 2Fe-2S ferredoxin-type domain occupies 2-106; it reads AKIIFIEHNG…GLVVHLPEKQ (105 aa). 4 residues coordinate [2Fe-2S] cluster: Cys40, Cys46, Cys49, and Cys87.

The protein belongs to the adrenodoxin/putidaredoxin family. It depends on [2Fe-2S] cluster as a cofactor.

Ferredoxins are small electron carrier proteins that participate in various redox reactions. FdVI is an essential protein required for growth of R.capsulatus. May be involved in Fe-S cluster assembly. The sequence is that of Ferredoxin-6 from Rhodobacter capsulatus (Rhodopseudomonas capsulata).